The primary structure comprises 496 residues: Membrane-bound lytic murein transglycosylase F (496 aa).

Positions 1–29 (MFFRPDFRPRCAKWLIATGLFLMLGACVE) are cleaved as a signal peptide. Residues 30–267 (KPTTLERVKE…RLKDRYYGHV (238 aa)) are non-LT domain. The interval 268–496 (DVLGYVGAYT…SGSSPDKPAL (229 aa)) is LT domain. E314 is a catalytic residue. The disordered stretch occupies residues 464–496 (VADGNLHVPGVDKTQPPAPPAPASGSSPDKPAL). A compositionally biased stretch (low complexity) spans 486–496 (ASGSSPDKPAL).

In the N-terminal section; belongs to the bacterial solute-binding protein 3 family. It in the C-terminal section; belongs to the transglycosylase Slt family.

The protein resides in the cell outer membrane. It carries out the reaction Exolytic cleavage of the (1-&gt;4)-beta-glycosidic linkage between N-acetylmuramic acid (MurNAc) and N-acetylglucosamine (GlcNAc) residues in peptidoglycan, from either the reducing or the non-reducing ends of the peptidoglycan chains, with concomitant formation of a 1,6-anhydrobond in the MurNAc residue.. Murein-degrading enzyme that degrades murein glycan strands and insoluble, high-molecular weight murein sacculi, with the concomitant formation of a 1,6-anhydromuramoyl product. Lytic transglycosylases (LTs) play an integral role in the metabolism of the peptidoglycan (PG) sacculus. Their lytic action creates space within the PG sacculus to allow for its expansion as well as for the insertion of various structures such as secretion systems and flagella. The polypeptide is Membrane-bound lytic murein transglycosylase F (Pseudomonas savastanoi pv. phaseolicola (strain 1448A / Race 6) (Pseudomonas syringae pv. phaseolicola (strain 1448A / Race 6))).